The chain runs to 248 residues: 5'-nucleotidase SurE (248 aa).

A divalent metal cation contacts are provided by Asp-8, Asp-9, Ser-39, and Asn-91.

The protein belongs to the SurE nucleotidase family. It depends on a divalent metal cation as a cofactor.

The protein resides in the cytoplasm. The catalysed reaction is a ribonucleoside 5'-phosphate + H2O = a ribonucleoside + phosphate. Its function is as follows. Nucleotidase that shows phosphatase activity on nucleoside 5'-monophosphates. This chain is 5'-nucleotidase SurE, found in Pseudoalteromonas atlantica (strain T6c / ATCC BAA-1087).